Reading from the N-terminus, the 156-residue chain is Small ribosomal subunit protein uS7 (156 aa).

It belongs to the universal ribosomal protein uS7 family. In terms of assembly, part of the 30S ribosomal subunit. Contacts proteins S9 and S11.

In terms of biological role, one of the primary rRNA binding proteins, it binds directly to 16S rRNA where it nucleates assembly of the head domain of the 30S subunit. Is located at the subunit interface close to the decoding center, probably blocks exit of the E-site tRNA. In Hahella chejuensis (strain KCTC 2396), this protein is Small ribosomal subunit protein uS7.